A 252-amino-acid polypeptide reads, in one-letter code: Imidazole glycerol phosphate synthase subunit HisF (252 aa).

Active-site residues include aspartate 11 and aspartate 130.

This sequence belongs to the HisA/HisF family. As to quaternary structure, heterodimer of HisH and HisF.

The protein resides in the cytoplasm. It catalyses the reaction 5-[(5-phospho-1-deoxy-D-ribulos-1-ylimino)methylamino]-1-(5-phospho-beta-D-ribosyl)imidazole-4-carboxamide + L-glutamine = D-erythro-1-(imidazol-4-yl)glycerol 3-phosphate + 5-amino-1-(5-phospho-beta-D-ribosyl)imidazole-4-carboxamide + L-glutamate + H(+). Its pathway is amino-acid biosynthesis; L-histidine biosynthesis; L-histidine from 5-phospho-alpha-D-ribose 1-diphosphate: step 5/9. IGPS catalyzes the conversion of PRFAR and glutamine to IGP, AICAR and glutamate. The HisF subunit catalyzes the cyclization activity that produces IGP and AICAR from PRFAR using the ammonia provided by the HisH subunit. In Paramagnetospirillum magneticum (strain ATCC 700264 / AMB-1) (Magnetospirillum magneticum), this protein is Imidazole glycerol phosphate synthase subunit HisF.